An 804-amino-acid chain; its full sequence is Probable replication endonuclease from prophage-like region 2 (804 aa).

Residues Tyr503 and Tyr507 each act as O-(5'-phospho-DNA)-tyrosine intermediate in the active site.

Belongs to the phage GPA family.

Its function is as follows. Possible endonuclease which induces a single-strand cut and initiates DNA replication. This is Probable replication endonuclease from prophage-like region 2 from Salmonella typhi.